The primary structure comprises 1078 residues: Phosphatidylinositol-3,5-bisphosphate 3-phosphatase MTMR4 (1078 aa).

One can recognise a Myotubularin phosphatase domain in the interval Asp154–Tyr571. Residues Arg267–Asp290 form a disordered region. Positions Asn270–Ser282 are enriched in low complexity. Residues Asn321, Asn346, and Ile347 each coordinate a 1,2-diacyl-sn-glycero-3-phospho-(1D-myo-inositol-3,5-bisphosphate). A 1,2-diacyl-sn-glycero-3-phospho-(1D-myo-inositol-3-phosphate) contacts are provided by Asn321, Asn346, and Ile347. Residue Cys408 is the Phosphocysteine intermediate of the active site. Ser409, Asp410, Gly411, Trp412, Asp413, Arg414, Lys450, and Arg454 together coordinate a 1,2-diacyl-sn-glycero-3-phospho-(1D-myo-inositol-3,5-bisphosphate). The a 1,2-diacyl-sn-glycero-3-phospho-(1D-myo-inositol-3-phosphate) site is built by Ser409, Asp410, Gly411, Trp412, Asp413, and Arg414. Arg454 is an a 1,2-diacyl-sn-glycero-3-phospho-(1D-myo-inositol-3-phosphate) binding site. Over residues Ser629–Lys648 the composition is skewed to polar residues. Positions Ser629–Asn694 are disordered. Positions Val904–Ile935 form a coiled coil. Positions Asp960–Glu982 are disordered. Residues Tyr968–Glu982 show a composition bias toward basic and acidic residues. The segment at Asp997–Gln1057 adopts an FYVE-type zinc-finger fold. 8 residues coordinate Zn(2+): Cys1003, Cys1006, Cys1019, Cys1022, Cys1027, Cys1030, Cys1049, and Cys1052.

This sequence belongs to the protein-tyrosine phosphatase family. Non-receptor class myotubularin subfamily. As to quaternary structure, homooligomeric.

It localises to the early endosome membrane. The protein localises to the recycling endosome membrane. Its subcellular location is the late endosome membrane. The protein resides in the cytoplasmic vesicle. It is found in the phagosome membrane. It catalyses the reaction a 1,2-diacyl-sn-glycero-3-phospho-(1D-myo-inositol-3-phosphate) + H2O = a 1,2-diacyl-sn-glycero-3-phospho-(1D-myo-inositol) + phosphate. The catalysed reaction is a 1,2-diacyl-sn-glycero-3-phospho-(1D-myo-inositol-3,5-bisphosphate) + H2O = a 1,2-diacyl-sn-glycero-3-phospho-(1D-myo-inositol-5-phosphate) + phosphate. It carries out the reaction 1,2-dioctanoyl-sn-glycero-3-phospho-(1-D-myo-inositol-3-phosphate) + H2O = 1,2-dioctanoyl-sn-glycero-3-phospho-(1D-myo-inositol) + phosphate. The enzyme catalyses 1,2-dioctanoyl-sn-glycero-3-phospho-(1D-myo-inositol-3,5-bisphosphate) + H2O = 1,2-dioctanoyl-sn-glycero-3-phospho-(1D-myo-inositol-5-phosphate) + phosphate. Lipid phosphatase that specifically dephosphorylates the D-3 position of phosphatidylinositol 3-phosphate and phosphatidylinositol 3,5-bisphosphate, generating phosphatidylinositol and phosphatidylinositol 5-phosphate. Decreases the levels of phosphatidylinositol 3-phosphate, a phospholipid found in cell membranes where it acts as key regulator of both cell signaling and intracellular membrane traffic, in a subset of endosomal membranes to negatively regulate both endocytic recycling and trafficking and/or maturation of endosomes toward lysosomes. Through phosphatidylinositol 3-phosphate turnover in phagosome membranes regulates phagocytosis and phagosome maturation. By decreasing phosphatidylinositol 3-monophosphate (PI3P) levels in immune cells it can also regulate the innate immune response. Beside its lipid phosphatase activity, can also function as a molecular adapter to regulate midbody abscission during mitotic cytokinesis. Can also negatively regulate TGF-beta and BMP signaling through Smad proteins dephosphorylation and retention in endosomes. The protein is Phosphatidylinositol-3,5-bisphosphate 3-phosphatase MTMR4 (mtmr4) of Xenopus laevis (African clawed frog).